The chain runs to 916 residues: Chitin synthase B (916 aa).

2 disordered regions span residues 1–84 (MAYQ…AGFH) and 114–141 (SPYARSETSSTEAWRQRQAPGGGGGGGL). A glycan (N-linked (GlcNAc...) asparagine) is linked at N18. Polar residues predominate over residues 60-75 (RGTSPVRPTSGYSLTE). Residue N546 is glycosylated (N-linked (GlcNAc...) asparagine). 7 consecutive transmembrane segments (helical) span residues 572–594 (MFFLHIQMLYNVFNTILTWFSLA), 628–648 (IINTIVKYVYLGLLLLQFILA), 663–683 (SFVVFGIIQIYVVVDALYLVV), 715–735 (IIIIALAATFGLYFVASFMYL), 743–763 (SFPAYMFVQSSYINVLNVYAF), 845–865 (LVTLWIFSNAFLAVCITSDGM), and 884–904 (ALLWSNAAVALVRFIGACWFL).

This sequence belongs to the chitin synthase family. Class III subfamily.

Its subcellular location is the cell membrane. It catalyses the reaction [(1-&gt;4)-N-acetyl-beta-D-glucosaminyl](n) + UDP-N-acetyl-alpha-D-glucosamine = [(1-&gt;4)-N-acetyl-beta-D-glucosaminyl](n+1) + UDP + H(+). In terms of biological role, polymerizes chitin, a structural polymer of the cell wall and septum, by transferring the sugar moiety of UDP-GlcNAc to the non-reducing end of the growing chitin polymer. Involved in hyphal growth and more particularly in branching. This chain is Chitin synthase B, found in Aspergillus oryzae (strain ATCC 42149 / RIB 40) (Yellow koji mold).